The chain runs to 501 residues: UPF0616 protein C1687.04 (501 aa).

Belongs to the UPF0616 family.

Its subcellular location is the cytoplasm. It is found in the nucleus. The polypeptide is UPF0616 protein C1687.04 (Schizosaccharomyces pombe (strain 972 / ATCC 24843) (Fission yeast)).